Consider the following 109-residue polypeptide: Thiosulfate sulfurtransferase GlpE (109 aa).

One can recognise a Rhodanese domain in the interval 16–104; sequence RAEGAVVVDI…WRSTYPGETA (89 aa). Residue cysteine 64 is the Cysteine persulfide intermediate of the active site.

The protein belongs to the GlpE family.

The protein resides in the cytoplasm. The catalysed reaction is thiosulfate + hydrogen cyanide = thiocyanate + sulfite + 2 H(+). It carries out the reaction thiosulfate + [thioredoxin]-dithiol = [thioredoxin]-disulfide + hydrogen sulfide + sulfite + 2 H(+). Transferase that catalyzes the transfer of sulfur from thiosulfate to thiophilic acceptors such as cyanide or dithiols. May function in a CysM-independent thiosulfate assimilation pathway by catalyzing the conversion of thiosulfate to sulfite, which can then be used for L-cysteine biosynthesis. This chain is Thiosulfate sulfurtransferase GlpE, found in Pseudomonas entomophila (strain L48).